Reading from the N-terminus, the 216-residue chain is Protein fmp32, mitochondrial (216 aa).

A coiled-coil region spans residues 111–133; sequence RQEMVALHSQVEQLFSDVERLKT. A helical transmembrane segment spans residues 193–215; sequence TLQWVFGIVTGSGALLLAYVRLI.

The protein belongs to the CCDC90 family.

It is found in the mitochondrion. Its subcellular location is the membrane. This is Protein fmp32, mitochondrial (fmp32) from Schizosaccharomyces pombe (strain 972 / ATCC 24843) (Fission yeast).